The chain runs to 393 residues: Nucleoside permease NupC (393 aa).

Transmembrane regions (helical) follow at residues 3-23 (YLIG…ASSG), 32-52 (IVVM…TGIG), 87-107 (TTFF…IGIL), 168-188 (LCAS…MTML), 191-211 (EYVV…ASII), 249-269 (VVVA…NGIF), 272-292 (VFGI…AFLV), 334-354 (AIVS…IIAG), and 372-392 (LKLL…VGLI).

Belongs to the concentrative nucleoside transporter (CNT) (TC 2.A.41) family.

The protein localises to the cell membrane. Transport of the pyrimidine nucleoside uridine. The polypeptide is Nucleoside permease NupC (Bacillus subtilis (strain 168)).